Here is a 304-residue protein sequence, read N- to C-terminus: GTPase Era (304 aa).

The region spanning 11–179 (YCGFIAIVGR…QKIVRKSLRE (169 aa)) is the Era-type G domain. Positions 19-26 (GRPNVGKS) are G1. Position 19–26 (19–26 (GRPNVGKS)) interacts with GTP. The G2 stretch occupies residues 45–49 (QTTRH). The interval 66-69 (DTPG) is G3. GTP contacts are provided by residues 66 to 70 (DTPGL) and 128 to 131 (NKVD). Residues 128–131 (NKVD) form a G4 region. A G5 region spans residues 158-160 (ISA). Residues 210–287 (TGEELPYSVT…HLELWVKVKA (78 aa)) enclose the KH type-2 domain.

The protein belongs to the TRAFAC class TrmE-Era-EngA-EngB-Septin-like GTPase superfamily. Era GTPase family. In terms of assembly, monomer.

Its subcellular location is the cytoplasm. It localises to the cell inner membrane. Functionally, an essential GTPase that binds both GDP and GTP, with rapid nucleotide exchange. Plays a role in 16S rRNA processing and 30S ribosomal subunit biogenesis and possibly also in cell cycle regulation and energy metabolism. The protein is GTPase Era of Haemophilus ducreyi (strain 35000HP / ATCC 700724).